Reading from the N-terminus, the 637-residue chain is Biosynthetic arginine decarboxylase (637 aa).

An N6-(pyridoxal phosphate)lysine modification is found at Lys-110. Residue 290–300 (IDVGGGLGVDY) participates in substrate binding.

Belongs to the Orn/Lys/Arg decarboxylase class-II family. SpeA subfamily. Requires Mg(2+) as cofactor. It depends on pyridoxal 5'-phosphate as a cofactor.

The enzyme catalyses L-arginine + H(+) = agmatine + CO2. Its function is as follows. Catalyzes the biosynthesis of agmatine from arginine. The sequence is that of Biosynthetic arginine decarboxylase from Pseudomonas putida (strain ATCC 47054 / DSM 6125 / CFBP 8728 / NCIMB 11950 / KT2440).